The sequence spans 567 residues: UPF0313 protein TM_0337 (567 aa).

Positions 288 to 560 (KAIETVKFSI…NKMKENVLFK (273 aa)) constitute a Radical SAM core domain. 3 residues coordinate [4Fe-4S] cluster: Cys303, Cys307, and Cys310.

The protein belongs to the UPF0313 family. It depends on [4Fe-4S] cluster as a cofactor.

The polypeptide is UPF0313 protein TM_0337 (Thermotoga maritima (strain ATCC 43589 / DSM 3109 / JCM 10099 / NBRC 100826 / MSB8)).